Consider the following 425-residue polypeptide: 5-aminovalerate aminotransferase DavT (425 aa).

Residues 112–113 (GS), Tyr-139, and 240–243 (DEVQ) each bind pyridoxal 5'-phosphate. Lys-269 bears the N6-(pyridoxal phosphate)lysine mark. A pyridoxal 5'-phosphate-binding site is contributed by Thr-298.

The protein belongs to the class-III pyridoxal-phosphate-dependent aminotransferase family. Pyridoxal 5'-phosphate serves as cofactor.

The catalysed reaction is 5-aminopentanoate + 2-oxoglutarate = 5-oxopentanoate + L-glutamate. Functionally, catalyzes the conversion of 5-aminovalerate to 5-oxopentanoate. This Pseudomonas putida (strain ATCC 47054 / DSM 6125 / CFBP 8728 / NCIMB 11950 / KT2440) protein is 5-aminovalerate aminotransferase DavT (davT).